Consider the following 717-residue polypeptide: Polyribonucleotide nucleotidyltransferase (717 aa).

The Mg(2+) site is built by aspartate 487 and aspartate 493. The region spanning 554 to 613 (PKIITMAINPDKIRDVIGPSGKQINKIIEETGVKIDIEQDGTVFISSINQEMNEKAKKII) is the KH domain. The S1 motif domain maps to 623–691 (GEIYLGKVKR…KQGRVNLSRK (69 aa)).

Belongs to the polyribonucleotide nucleotidyltransferase family. It depends on Mg(2+) as a cofactor.

It localises to the cytoplasm. The enzyme catalyses RNA(n+1) + phosphate = RNA(n) + a ribonucleoside 5'-diphosphate. Its function is as follows. Involved in mRNA degradation. Catalyzes the phosphorolysis of single-stranded polyribonucleotides processively in the 3'- to 5'-direction. In Bacillus mycoides (strain KBAB4) (Bacillus weihenstephanensis), this protein is Polyribonucleotide nucleotidyltransferase.